The sequence spans 369 residues: Septin-5 (369 aa).

At T13 the chain carries Phosphothreonine. The Septin-type G domain occupies K41–Q314. A G1 motif region spans residues G51–S58. Residues G51–S58, T85, and G111 each bind GTP. Positions D108–G111 are G3 motif. Position 168 is an omega-N-methylarginine (R168). Positions A189–D192 are G4 motif. Residue K190–E198 participates in GTP binding. The residue at position 225 (S225) is a Phosphoserine. GTP is bound by residues G248 and R263. S327 is subject to Phosphoserine. T336 is subject to Phosphothreonine. A coiled-coil region spans residues D338–Q369.

The protein belongs to the TRAFAC class TrmE-Era-EngA-EngB-Septin-like GTPase superfamily. Septin GTPase family. Septins polymerize into heterooligomeric protein complexes that form filaments, and can associate with cellular membranes, actin filaments and microtubules. GTPase activity is required for filament formation. Interacts with SEPTIN2 and SEPTIN5. In platelets, associated with a complex containing STX4. Interacts with PRKN; this interaction leads to SEPTIN5 ubiquitination and degradation. Interacts with DYRK1A. Interacts with STX1A; in the cerebellar cortex. In terms of processing, phosphorylated by DYRK1A. In terms of tissue distribution, expressed in brain and testis and at lower level in heart, spleen, lung and kidney.

It localises to the cytoplasm. It is found in the cytoskeleton. Its function is as follows. Filament-forming cytoskeletal GTPase. May play a role in cytokinesis (Potential). May play a role in platelet secretion. This is Septin-5 from Rattus norvegicus (Rat).